The sequence spans 114 residues: UPF0342 protein LCA_0622 (114 aa).

Belongs to the UPF0342 family.

This chain is UPF0342 protein LCA_0622, found in Latilactobacillus sakei subsp. sakei (strain 23K) (Lactobacillus sakei subsp. sakei).